We begin with the raw amino-acid sequence, 177 residues long: Large ribosomal subunit protein eL20 (177 aa).

It belongs to the eukaryotic ribosomal protein eL20 family.

The polypeptide is Large ribosomal subunit protein eL20 (RpL18A) (Drosophila melanogaster (Fruit fly)).